The sequence spans 477 residues: Cysteine--tRNA ligase (477 aa).

Zn(2+) is bound at residue Cys28. The 'HIGH' region signature appears at Pro30–Asn40. Residues Cys213, His238, and Glu242 each contribute to the Zn(2+) site. The short motif at Lys270–Ser274 is the 'KMSKS' region element. Residue Lys273 coordinates ATP.

It belongs to the class-I aminoacyl-tRNA synthetase family. In terms of assembly, monomer. The cofactor is Zn(2+).

The protein localises to the cytoplasm. It catalyses the reaction tRNA(Cys) + L-cysteine + ATP = L-cysteinyl-tRNA(Cys) + AMP + diphosphate. This is Cysteine--tRNA ligase from Chlamydia trachomatis serovar A (strain ATCC VR-571B / DSM 19440 / HAR-13).